The sequence spans 115 residues: U3-lycotoxin-Ls1j (115 aa).

A signal peptide spans 1-20 (MKFVLLFGVFLVTLFSYSSA). A propeptide spanning residues 21–44 (EMLDDFDQADEDELLSLIEKEEAR) is cleaved from the precursor. Cystine bridges form between cysteine 48-cysteine 63, cysteine 55-cysteine 72, cysteine 62-cysteine 87, and cysteine 74-cysteine 85.

This sequence belongs to the neurotoxin 19 (CSTX) family. 01 subfamily. In terms of tissue distribution, expressed by the venom gland.

The protein resides in the secreted. The sequence is that of U3-lycotoxin-Ls1j from Lycosa singoriensis (Wolf spider).